A 62-amino-acid polypeptide reads, in one-letter code: KEGYAMDHEGCKFSCFPRPAGFCDGYCKTHLKASSGYCAWPACYCYGVPSNIKVWDYATNKC.

The LCN-type CS-alpha/beta domain maps to 1–62 (KEGYAMDHEG…KVWDYATNKC (62 aa)). 4 disulfides stabilise this stretch: Cys11-Cys62, Cys15-Cys38, Cys23-Cys43, and Cys27-Cys45. At Cys62 the chain carries Cysteine amide.

This sequence belongs to the long (4 C-C) scorpion toxin superfamily. Sodium channel inhibitor family. Beta subfamily. Expressed by the venom gland.

It is found in the secreted. In terms of biological role, beta toxins bind voltage-independently at site-4 of sodium channels (Nav) and shift the voltage of activation toward more negative potentials thereby affecting sodium channel activation and promoting spontaneous and repetitive firing. This toxin is active on mammals. This Tityus bahiensis (Brazilian scorpion) protein is Toxin Tb2.